A 94-amino-acid chain; its full sequence is Small ribosomal subunit protein uS19 (94 aa).

Belongs to the universal ribosomal protein uS19 family.

Its function is as follows. Protein S19 forms a complex with S13 that binds strongly to the 16S ribosomal RNA. This chain is Small ribosomal subunit protein uS19, found in Caldicellulosiruptor saccharolyticus (strain ATCC 43494 / DSM 8903 / Tp8T 6331).